The chain runs to 177 residues: Peptide methionine sulfoxide reductase MsrA (177 aa).

Residue C15 is part of the active site.

The protein belongs to the MsrA Met sulfoxide reductase family.

It catalyses the reaction L-methionyl-[protein] + [thioredoxin]-disulfide + H2O = L-methionyl-(S)-S-oxide-[protein] + [thioredoxin]-dithiol. The catalysed reaction is [thioredoxin]-disulfide + L-methionine + H2O = L-methionine (S)-S-oxide + [thioredoxin]-dithiol. Its function is as follows. Has an important function as a repair enzyme for proteins that have been inactivated by oxidation. Catalyzes the reversible oxidation-reduction of methionine sulfoxide in proteins to methionine. The chain is Peptide methionine sulfoxide reductase MsrA from Listeria monocytogenes serotype 4a (strain HCC23).